Consider the following 297-residue polypeptide: ATP phosphoribosyltransferase (297 aa).

This sequence belongs to the ATP phosphoribosyltransferase family.

Its subcellular location is the cytoplasm. It catalyses the reaction 1-(5-phospho-beta-D-ribosyl)-ATP + diphosphate = 5-phospho-alpha-D-ribose 1-diphosphate + ATP. The protein operates within amino-acid biosynthesis; L-histidine biosynthesis; L-histidine from 5-phospho-alpha-D-ribose 1-diphosphate: step 1/9. In terms of biological role, catalyzes the condensation of ATP and 5-phosphoribose 1-diphosphate to form N'-(5'-phosphoribosyl)-ATP (PR-ATP). Has a crucial role in the pathway because the rate of histidine biosynthesis seems to be controlled primarily by regulation of the enzymatic activity. This is ATP phosphoribosyltransferase (HIS1) from Eremothecium gossypii (strain ATCC 10895 / CBS 109.51 / FGSC 9923 / NRRL Y-1056) (Yeast).